We begin with the raw amino-acid sequence, 166 residues long: Phospholipase A2 inhibitor clone 10 (166 aa).

An N-terminal signal peptide occupies residues 1–19; the sequence is MRLILLSSLLLLGIFLANG. Residues 46 to 161 form the C-type lectin domain; it reads LKYSFLTVHR…CDDNLLVVCE (116 aa). 2 disulfide bridges follow: Cys83-Cys160 and Cys138-Cys152. Asn122 carries N-linked (GlcNAc...) asparagine glycosylation.

It belongs to the alpha-type phospholipase A2 inhibitor family. Homotrimer; non-covalently linked. As to expression, expressed by the liver.

It is found in the secreted. Its function is as follows. This phospholipase A2 inhibitor binds directly phospholipase A2 in the presence or absence of calcium. This is Phospholipase A2 inhibitor clone 10 from Bothrops moojeni (Lance-headed viper).